Consider the following 299-residue polypeptide: N-acetylaspartate synthetase (299 aa).

Positions A44–G57 are enriched in pro residues. Residues A44–P70 are disordered. Residues P60–P70 are compositionally biased toward gly residues. A helical membrane pass occupies residues Y118–V138. Residues L143–A280 enclose the N-acetyltransferase domain.

It belongs to the NAT8 family. As to expression, expressed in brain, including in mesencephalic dopaminergic neurons of the substantia nigra and ventral tegmental area and oligodendrocytes. Expressed in cortical pyramidal neurons and granule cells of the hippocampus (at protein level).

The protein localises to the cytoplasm. It is found in the microsome membrane. It localises to the mitochondrion membrane. The protein resides in the endoplasmic reticulum membrane. The catalysed reaction is L-aspartate + acetyl-CoA = N-acetyl-L-aspartate + CoA + H(+). With respect to regulation, aminooxyacetic acid (AOAA) blocks its activity in both cytoplasm and mitochondria. Catalyzes the synthesis of N-acetylaspartate acid (NAA) from L-aspartate and acetyl-CoA. Promotes dopamine uptake by regulating TNF-alpha expression. Attenuates methamphetamine-induced inhibition of dopamine uptake. The protein is N-acetylaspartate synthetase (Nat8l) of Rattus norvegicus (Rat).